Reading from the N-terminus, the 343-residue chain is Glyceraldehyde-3-phosphate dehydrogenase (343 aa).

NAD(+) is bound by residues 12–13 and glycine 114; that span reads SI. Residue 143-145 coordinates D-glyceraldehyde 3-phosphate; it reads SCN. Catalysis depends on cysteine 144, which acts as the Nucleophile. NAD(+) is bound at residue arginine 172. 198–199 contributes to the D-glyceraldehyde 3-phosphate binding site; it reads HG. Glutamine 307 contributes to the NAD(+) binding site.

It belongs to the glyceraldehyde-3-phosphate dehydrogenase family. As to quaternary structure, homotetramer.

The protein resides in the cytoplasm. It catalyses the reaction D-glyceraldehyde 3-phosphate + phosphate + NADP(+) = (2R)-3-phospho-glyceroyl phosphate + NADPH + H(+). The catalysed reaction is D-glyceraldehyde 3-phosphate + phosphate + NAD(+) = (2R)-3-phospho-glyceroyl phosphate + NADH + H(+). The protein operates within carbohydrate degradation; glycolysis; pyruvate from D-glyceraldehyde 3-phosphate: step 1/5. This chain is Glyceraldehyde-3-phosphate dehydrogenase (gap), found in Methanocaldococcus jannaschii (strain ATCC 43067 / DSM 2661 / JAL-1 / JCM 10045 / NBRC 100440) (Methanococcus jannaschii).